Consider the following 62-residue polypeptide: Large ribosomal subunit protein bL32 (62 aa).

A compositionally biased stretch (basic residues) spans 1-16; the sequence is MAVPKRKTSPMKRGFR. The interval 1-62 is disordered; the sequence is MAVPKRKTSP…QILTPKNKEA (62 aa). Residues 28–44 are compositionally biased toward basic and acidic residues; the sequence is VEDKDSGELRRPHHVDL.

It belongs to the bacterial ribosomal protein bL32 family.

The chain is Large ribosomal subunit protein bL32 from Methylocella silvestris (strain DSM 15510 / CIP 108128 / LMG 27833 / NCIMB 13906 / BL2).